A 359-amino-acid chain; its full sequence is Nicotinate-nucleotide--dimethylbenzimidazole phosphoribosyltransferase (359 aa).

Residue Glu-318 is the Proton acceptor of the active site.

This sequence belongs to the CobT family. Homodimer.

The enzyme catalyses 5,6-dimethylbenzimidazole + nicotinate beta-D-ribonucleotide = alpha-ribazole 5'-phosphate + nicotinate + H(+). The protein operates within nucleoside biosynthesis; alpha-ribazole biosynthesis; alpha-ribazole from 5,6-dimethylbenzimidazole: step 1/2. Catalyzes the synthesis of alpha-ribazole-5'-phosphate from nicotinate mononucleotide (NAMN) and 5,6-dimethylbenzimidazole (DMB). The polypeptide is Nicotinate-nucleotide--dimethylbenzimidazole phosphoribosyltransferase (Escherichia coli (strain UTI89 / UPEC)).